Reading from the N-terminus, the 588-residue chain is Endogenous retrovirus group K member 7 Env polyprotein (588 aa).

The segment at 355 to 375 is fusion peptide; the sequence is FIFTLIAVIMGLIAVTATAAV. A helical transmembrane segment spans residues 522 to 542; it reads IGSTTIINLILILVCLFCLLL.

The protein belongs to the beta type-B retroviral envelope protein family. HERV class-II K(HML-2) env subfamily. As to quaternary structure, the surface (SU) and transmembrane (TM) proteins form a heterodimer. SU and TM are attached by noncovalent interactions or by a labile interchain disulfide bond. Post-translationally, specific enzymatic cleavages in vivo yield the mature SU and TM proteins. In terms of tissue distribution, expressed in lung, placenta, testis and peripheral blood lymphocytes.

The protein localises to the virion. It is found in the cell membrane. Its function is as follows. Retroviral envelope proteins mediate receptor recognition and membrane fusion during early infection. Endogenous envelope proteins may have kept, lost or modified their original function during evolution. Functionally, SU mediates receptor recognition. TM anchors the envelope heterodimer to the viral membrane through one transmembrane domain. The other hydrophobic domain, called fusion peptide, mediates fusion of the viral membrane with the target cell membrane. The sequence is that of Endogenous retrovirus group K member 7 Env polyprotein (ERVK-7) from Homo sapiens (Human).